A 293-amino-acid polypeptide reads, in one-letter code: Proline iminopeptidase (293 aa).

The AB hydrolase-1 domain maps to 28 to 277 (PLVLLHGGPG…NCSHMSFVQK (250 aa)). Ser105 (nucleophile) is an active-site residue. The active site involves Asp244. His271 serves as the catalytic Proton donor.

This sequence belongs to the peptidase S33 family.

The protein resides in the cell envelope. It carries out the reaction Release of N-terminal proline from a peptide.. Functionally, releases the N-terminal proline from various substrates. This is Proline iminopeptidase from Lactobacillus acidophilus (strain ATCC 700396 / NCK56 / N2 / NCFM).